The primary structure comprises 975 residues: Translation initiation factor IF-2 (975 aa).

2 stretches are compositionally biased toward basic and acidic residues: residues 48 to 63 (DHLR…DKRK) and 120 to 177 (AELK…EAAA). Disordered regions lie at residues 48–85 (DHLR…KART) and 98–390 (KRDD…PTEP). The segment covering 178 to 211 (KRAAAAQAEAAQQAAAAREQAQRAQSEPAEQSAQ) has biased composition (low complexity). The span at 212–263 (DEARAAAERAAQREAAKKAEDAAREAADKARAEQEEIRKRREAAEAEARAIR) shows a compositional bias: basic and acidic residues. Positions 302 to 330 (KPAGEAAAARPAAKKPASGAPAPAAAPAG) are enriched in low complexity. A compositionally biased stretch (gly residues) spans 359-372 (SSGGVDRGWRGGPK). Positions 475 to 644 (PRPPVVTVMG…LLQAEVLELK (170 aa)) constitute a tr-type G domain. Positions 484–491 (GHVDHGKT) are G1. GTP is bound at residue 484–491 (GHVDHGKT). Residues 509–513 (GITQH) are G2. A G3 region spans residues 530–533 (DTPG). GTP contacts are provided by residues 530–534 (DTPGH) and 584–587 (NKID). Residues 584 to 587 (NKID) are G4. Residues 620–622 (SAK) are G5.

This sequence belongs to the TRAFAC class translation factor GTPase superfamily. Classic translation factor GTPase family. IF-2 subfamily.

The protein resides in the cytoplasm. In terms of biological role, one of the essential components for the initiation of protein synthesis. Protects formylmethionyl-tRNA from spontaneous hydrolysis and promotes its binding to the 30S ribosomal subunits. Also involved in the hydrolysis of GTP during the formation of the 70S ribosomal complex. In Burkholderia pseudomallei (strain 1106a), this protein is Translation initiation factor IF-2.